We begin with the raw amino-acid sequence, 340 residues long: Aldo-keto reductase yakc [NADP(+)] (340 aa).

Tyr-56 (proton donor) is an active-site residue. His-126 contributes to the substrate binding site. Residue 208–218 coordinates NADP(+); the sequence is APLGRGFLTGA.

Belongs to the aldo/keto reductase family. Aldo/keto reductase 2 subfamily. Monomer.

The polypeptide is Aldo-keto reductase yakc [NADP(+)] (yakc) (Schizosaccharomyces pombe (strain 972 / ATCC 24843) (Fission yeast)).